The sequence spans 160 residues: Endoribonuclease YbeY (160 aa).

3 residues coordinate Zn(2+): His118, His122, and His128.

This sequence belongs to the endoribonuclease YbeY family. The cofactor is Zn(2+).

It is found in the cytoplasm. In terms of biological role, single strand-specific metallo-endoribonuclease involved in late-stage 70S ribosome quality control and in maturation of the 3' terminus of the 16S rRNA. The protein is Endoribonuclease YbeY of Treponema pallidum (strain Nichols).